The sequence spans 254 residues: Tumor necrosis factor ligand superfamily member 9 (254 aa).

Residues 1-28 (MEYASDASLDPEAPWPPAPRARACRVLP) are Cytoplasmic-facing. The chain crosses the membrane as a helical; Signal-anchor for type II membrane protein span at residues 29–49 (WALVAGLLLLLLLAAACAVFL). Residues 50-254 (ACPWAVSGAR…PAGLPSPRSE (205 aa)) are Extracellular-facing. The 150-residue stretch at 91–240 (MFAQLVAQNV…GATVLGLFRV (150 aa)) folds into the THD domain.

The protein belongs to the tumor necrosis factor family. As to quaternary structure, homotrimer. As to expression, expressed in brain, placenta, lung, skeletal muscle and kidney.

It is found in the membrane. In terms of biological role, cytokine that binds to TNFRSF9. Induces the proliferation of activated peripheral blood T-cells. May have a role in activation-induced cell death (AICD). May play a role in cognate interactions between T-cells and B-cells/macrophages. This chain is Tumor necrosis factor ligand superfamily member 9 (TNFSF9), found in Homo sapiens (Human).